A 179-amino-acid chain; its full sequence is Large ribosomal subunit protein uL5 (179 aa).

Belongs to the universal ribosomal protein uL5 family. In terms of assembly, part of the 50S ribosomal subunit; part of the 5S rRNA/L5/L18/L25 subcomplex. Contacts the 5S rRNA and the P site tRNA. Forms a bridge to the 30S subunit in the 70S ribosome.

Functionally, this is one of the proteins that bind and probably mediate the attachment of the 5S RNA into the large ribosomal subunit, where it forms part of the central protuberance. In the 70S ribosome it contacts protein S13 of the 30S subunit (bridge B1b), connecting the 2 subunits; this bridge is implicated in subunit movement. Contacts the P site tRNA; the 5S rRNA and some of its associated proteins might help stabilize positioning of ribosome-bound tRNAs. The chain is Large ribosomal subunit protein uL5 from Histophilus somni (strain 129Pt) (Haemophilus somnus).